The primary structure comprises 343 residues: Anthranilate phosphoribosyltransferase (343 aa).

Residues Gly84, 87-88 (GD), Thr92, 94-97 (NIST), 112-120 (KHGNRGVSS), and Ser124 each bind 5-phospho-alpha-D-ribose 1-diphosphate. Gly84 contributes to the anthranilate binding site. Position 96 (Ser96) interacts with Mg(2+). An anthranilate-binding site is contributed by Asn115. Arg170 contacts anthranilate. Residues Asp229 and Glu230 each contribute to the Mg(2+) site.

This sequence belongs to the anthranilate phosphoribosyltransferase family. In terms of assembly, homodimer. The cofactor is Mg(2+).

It catalyses the reaction N-(5-phospho-beta-D-ribosyl)anthranilate + diphosphate = 5-phospho-alpha-D-ribose 1-diphosphate + anthranilate. It functions in the pathway amino-acid biosynthesis; L-tryptophan biosynthesis; L-tryptophan from chorismate: step 2/5. Functionally, catalyzes the transfer of the phosphoribosyl group of 5-phosphorylribose-1-pyrophosphate (PRPP) to anthranilate to yield N-(5'-phosphoribosyl)-anthranilate (PRA). The sequence is that of Anthranilate phosphoribosyltransferase from Burkholderia ambifaria (strain MC40-6).